The following is a 191-amino-acid chain: Fe/S biogenesis protein NfuA (191 aa).

[4Fe-4S] cluster is bound by residues cysteine 149 and cysteine 152.

Belongs to the NfuA family. Homodimer. The cofactor is [4Fe-4S] cluster.

Its function is as follows. Involved in iron-sulfur cluster biogenesis. Binds a 4Fe-4S cluster, can transfer this cluster to apoproteins, and thereby intervenes in the maturation of Fe/S proteins. Could also act as a scaffold/chaperone for damaged Fe/S proteins. The polypeptide is Fe/S biogenesis protein NfuA (Salmonella typhi).